The primary structure comprises 221 residues: Cytidylate kinase 1 (221 aa).

ATP is bound at residue 7–15 (GPSASGKSS).

This sequence belongs to the cytidylate kinase family. Type 1 subfamily.

The protein localises to the cytoplasm. The enzyme catalyses CMP + ATP = CDP + ADP. It catalyses the reaction dCMP + ATP = dCDP + ADP. The polypeptide is Cytidylate kinase 1 (Borreliella burgdorferi (strain ATCC 35210 / DSM 4680 / CIP 102532 / B31) (Borrelia burgdorferi)).